The primary structure comprises 360 residues: D-xylose 1-dehydrogenase [NADP(+)] (360 aa).

The protein belongs to the Gfo/Idh/MocA family. As to quaternary structure, homotretramer.

It carries out the reaction D-xylofuranose + NADP(+) = D-xylono-1,4-lactone + NADPH + H(+). Its function is as follows. NADP-dependent D-xylose dehydrogenase involved in the degradation of D-xylose, a major component of hemicelluloses such as xylan. In addition to D-xylose, oxidizes D-ribose at similar kinetic constants, whereas D-glucose is oxidized with about 70-fold lower catalytic efficiency. This chain is D-xylose 1-dehydrogenase [NADP(+)] (gfo6), found in Haloarcula marismortui (strain ATCC 43049 / DSM 3752 / JCM 8966 / VKM B-1809) (Halobacterium marismortui).